A 171-amino-acid chain; its full sequence is Transcriptional repressor NrdR (171 aa).

Residues 3 to 34 fold into a zinc finger; that stretch reads CPFCGDPNTQVADTRENEGGEVVRRRRRCPKC. The region spanning 49 to 139 is the ATP-cone domain; that stretch reads PHIVKRNGNR…VYRNFADVDE (91 aa). Residues 148–171 form a disordered region; sequence KARPKRNRPAEPPEPTSENDLFRS.

The protein belongs to the NrdR family. Zn(2+) serves as cofactor.

Functionally, negatively regulates transcription of bacterial ribonucleotide reductase nrd genes and operons by binding to NrdR-boxes. The protein is Transcriptional repressor NrdR of Aromatoleum aromaticum (strain DSM 19018 / LMG 30748 / EbN1) (Azoarcus sp. (strain EbN1)).